The sequence spans 162 residues: Methyl-coenzyme M reductase II operon protein D (162 aa).

As to quaternary structure, MCR is composed of three subunits: alpha, beta, and gamma. The function of protein D is not known.

In Methanothermobacter thermautotrophicus (strain ATCC 29096 / DSM 1053 / JCM 10044 / NBRC 100330 / Delta H) (Methanobacterium thermoautotrophicum), this protein is Methyl-coenzyme M reductase II operon protein D (mrtD).